The primary structure comprises 775 residues: Kazrin (775 aa).

The interval 38 to 66 (AELSGGGGPGPGPGAAASASAAGDSAATN) is disordered. Over residues 51 to 64 (GAAASASAAGDSAA) the composition is skewed to low complexity. Residues 74 to 256 (AQVLLREEVS…LATLTKDVPK (183 aa)) adopt a coiled-coil conformation. Positions 174 to 333 (RDFIRNYEQH…SAAEGDRSST (160 aa)) are interaction with PPL. Residues 290 to 427 (QQTLYHSHPP…QSLSLSEGEE (138 aa)) are disordered. A phosphoserine mark is found at serine 352, serine 367, and serine 387. Over residues 411 to 422 (SQCSPTRQSLSL) the composition is skewed to polar residues. SAM domains are found at residues 446-511 (WKAG…YRDA), 524-588 (DHHW…LYQV), and 612-679 (WTNQ…SAVF). 2 disordered regions span residues 688 to 715 (REAE…SSGL) and 729 to 762 (RGFS…LEQC). Positions 732 to 742 (SSKDPDFHDDY) are enriched in basic and acidic residues.

The protein belongs to the kazrin family. Isoform 2, isoform 3 and isoform 4 interact with PPL N-terminus. As to expression, isoform 2, isoform 3 and isoform 4 are expressed in several cell lines including keratinocytes and bladder and epidermoid carcinoma (at protein level). Isoform 2, isoform 3 and isoform 4 are expressed in hair follicle and interfollicular epidermis (at protein level).

It localises to the cytoplasm. The protein resides in the cytoskeleton. The protein localises to the cell junction. It is found in the desmosome. Its subcellular location is the nucleus. Functionally, component of the cornified envelope of keratinocytes. May be involved in the interplay between adherens junctions and desmosomes. The function in the nucleus is not known. This chain is Kazrin, found in Homo sapiens (Human).